The sequence spans 379 residues: MPTSEQNEFSHGSVGVVYTQSIRFESLTLEGGETITPLEIAYETYGTLNEKKDNAILVCHALSGDAHAAGFHEGDKRPGWWDYYIGPGKSFDTNRYFIISSNVIGGCKGSSGPLTINGKNGKPFQSTFPFVSIGDMVNAQEKLISHFGIHKLFAVAGGSMGGMQALQWSVAYPDRLKNCIVMASSSEHSAQQIAFNEVGRQAILSDPNWNQGLYTQENRPSKGLALARMMGHITYLSDEMMREKFGRKPPKGNIQSTDFAVGSYLIYQGESFVDRFDANSYIYVTKALDHFSLGTGKELTKVLAKVRCRFLVVAYTSDWLYPPYQSEEIVKSLEVNAVPVSFVELNNPAGRHDSFLLPSEQQDSILRDFLSSTDEGVFL.

Positions 54 to 332 constitute an AB hydrolase-1 domain; that stretch reads NAILVCHALS…PYQSEEIVKS (279 aa). Ser159 functions as the Nucleophile in the catalytic mechanism. Arg228 lines the substrate pocket. Catalysis depends on residues Asp318 and His352. Substrate is bound at residue Asp353.

This sequence belongs to the AB hydrolase superfamily. MetX family. As to quaternary structure, homodimer.

It localises to the cytoplasm. The catalysed reaction is L-homoserine + acetyl-CoA = O-acetyl-L-homoserine + CoA. It participates in amino-acid biosynthesis; L-methionine biosynthesis via de novo pathway; O-acetyl-L-homoserine from L-homoserine: step 1/1. In terms of biological role, transfers an acetyl group from acetyl-CoA to L-homoserine, forming acetyl-L-homoserine. This is Homoserine O-acetyltransferase from Leptospira meyeri.